The sequence spans 158 residues: Small ribosomal subunit protein uS9 (158 aa).

It belongs to the universal ribosomal protein uS9 family.

The chain is Small ribosomal subunit protein uS9 from Brucella canis (strain ATCC 23365 / NCTC 10854 / RM-666).